A 1265-amino-acid polypeptide reads, in one-letter code: Protein diaphanous homolog 1 (1265 aa).

An N-acetylmethionine modification is found at Met1. A compositionally biased stretch (gly residues) spans 1 to 12 (MEPSGGGLGPGR). 2 disordered regions span residues 1–42 (MEPS…FTLK) and 54–83 (SMRIKKEKEKPNSAHRNSSASYGDDPTAQS). Ser22 is subject to Phosphoserine. Over residues 54–65 (SMRIKKEKEKPN) the composition is skewed to basic and acidic residues. The segment covering 67-83 (AHRNSSASYGDDPTAQS) has biased composition (polar residues). Positions 84 to 449 (LQDISDDQVL…QIVLHKNGTD (366 aa)) constitute a GBD/FH3 domain. Residues 474-568 (VEKSEAKATE…KKEMASLSAV (95 aa)) are a coiled coil. The tract at residues 573 to 742 (SVSSSAAVPQ…PPPPGMGVPP (170 aa)) is disordered. Pro residues-rich tracts occupy residues 594–628 (IPPPPPPPLPGGAVPPPPPPPLPAGTGIPPPPPLP) and 645–742 (IPPP…GVPP). The region spanning 625–757 (PPLPGGACIS…FGIPAAPVLP (133 aa)) is the FH1 domain. Thr761 is modified (phosphothreonine). In terms of domain architecture, FH2 spans 762-1164 (PKKVYKPEVQ…MRRAKLAKEK (403 aa)). An N6-acetyllysine mark is found at Lys1050 and Lys1096. A Phosphotyrosine modification is found at Tyr1114. Residues 1141–1185 (AVKENQKRRETEEKMRRAKLAKEKAEKERLEKQQKREQLIDMNAE) adopt a coiled-coil conformation. A DAD domain is found at 1187 to 1215 (DETGVMDSLLEALQSGAAFRRKRGPRQVN). Ser1247 is modified (phosphoserine).

It belongs to the formin homology family. Diaphanous subfamily. In terms of assembly, homodimer. Interacts with the GTP-bound form of RHOA. Interacts with RHOC, PFY1, MAPRE1, BAIAP2 and APC. Interacts with SCAI. Interacts with DCAF7, via FH2 domain. Interacts with NCDN. Interacts with OSBPL10, OSBPL2, VIM, TUBB and DYN1. Phosphorylation at Thr-761 is stimulated by cAMP and regulates stability, complex formation and mitochondrial movement. In terms of tissue distribution, expressed in testis. Present in Sertoli cells (at protein level).

The protein resides in the cell membrane. It is found in the cell projection. Its subcellular location is the ruffle membrane. It localises to the cytoplasm. The protein localises to the cytoskeleton. The protein resides in the microtubule organizing center. It is found in the centrosome. Its subcellular location is the spindle. It localises to the nucleus. Functionally, actin nucleation and elongation factor required for the assembly of F-actin structures, such as actin cables and stress fibers. Binds to the barbed end of the actin filament and slows down actin polymerization and depolymerization. Required for cytokinesis, and transcriptional activation of the serum response factor. DFR proteins couple Rho and Src tyrosine kinase during signaling and the regulation of actin dynamics. Functions as a scaffold protein for MAPRE1 and APC to stabilize microtubules and promote cell migration. Has neurite outgrowth promoting activity. Acts in a Rho-dependent manner to recruit PFY1 to the membrane. The MEMO1-RHOA-DIAPH1 signaling pathway plays an important role in ERBB2-dependent stabilization of microtubules at the cell cortex. It controls the localization of APC and CLASP2 to the cell membrane, via the regulation of GSK3B activity. In turn, membrane-bound APC allows the localization of the MACF1 to the cell membrane, which is required for microtubule capture and stabilization. Plays a role in the regulation of cell morphology and cytoskeletal organization. Required in the control of cell shape. Also acts as an actin nucleation and elongation factor in the nucleus by promoting nuclear actin polymerization inside the nucleus to drive serum-dependent SRF-MRTFA activity. The polypeptide is Protein diaphanous homolog 1 (Rattus norvegicus (Rat)).